The chain runs to 304 residues: tRNA dimethylallyltransferase (304 aa).

Residue 8-15 coordinates ATP; sequence GPTASGKS. 10–15 provides a ligand contact to substrate; sequence TASGKS. An interaction with substrate tRNA region spans residues 33 to 36; sequence DSRQ.

Belongs to the IPP transferase family. As to quaternary structure, monomer. It depends on Mg(2+) as a cofactor.

The enzyme catalyses adenosine(37) in tRNA + dimethylallyl diphosphate = N(6)-dimethylallyladenosine(37) in tRNA + diphosphate. Catalyzes the transfer of a dimethylallyl group onto the adenine at position 37 in tRNAs that read codons beginning with uridine, leading to the formation of N6-(dimethylallyl)adenosine (i(6)A). This Chlorobium luteolum (strain DSM 273 / BCRC 81028 / 2530) (Pelodictyon luteolum) protein is tRNA dimethylallyltransferase.